The sequence spans 132 residues: Replication enhancer protein (132 aa).

Belongs to the geminiviridae replication enhancer protein family. Homooligomer. Interacts with the replication-associated protein (REP). Interacts with host proliferating cell nuclear antigen (PCNA). Interacts with host retinoblastoma-related protein 1 (RBR1), and may thereby deregulate the host cell cycle. Oligomerization and interaction with PCNA are necessary for optimal replication enhancement.

In terms of biological role, increases viral DNA accumulation. Enhances infectivity and symptom expression. The polypeptide is Replication enhancer protein (Potato yellow mosaic virus (isolate Venezuela) (PYMV)).